The primary structure comprises 597 residues: Elongation factor 4 (597 aa).

In terms of domain architecture, tr-type G spans 2 to 184 (KNIRNFSIIA…EIVAKIPAPT (183 aa)). Residues 14–19 (DHGKST) and 131–134 (NKID) each bind GTP.

It belongs to the TRAFAC class translation factor GTPase superfamily. Classic translation factor GTPase family. LepA subfamily.

It localises to the cell inner membrane. It carries out the reaction GTP + H2O = GDP + phosphate + H(+). Required for accurate and efficient protein synthesis under certain stress conditions. May act as a fidelity factor of the translation reaction, by catalyzing a one-codon backward translocation of tRNAs on improperly translocated ribosomes. Back-translocation proceeds from a post-translocation (POST) complex to a pre-translocation (PRE) complex, thus giving elongation factor G a second chance to translocate the tRNAs correctly. Binds to ribosomes in a GTP-dependent manner. The chain is Elongation factor 4 from Neisseria gonorrhoeae (strain ATCC 700825 / FA 1090).